The following is a 507-amino-acid chain: Histidine ammonia-lyase (507 aa).

The segment at residues 141–143 (ASG) is a cross-link (5-imidazolinone (Ala-Gly)). Position 142 is a 2,3-didehydroalanine (Ser) (Ser142).

This sequence belongs to the PAL/histidase family. In terms of processing, contains an active site 4-methylidene-imidazol-5-one (MIO), which is formed autocatalytically by cyclization and dehydration of residues Ala-Ser-Gly.

Its subcellular location is the cytoplasm. The enzyme catalyses L-histidine = trans-urocanate + NH4(+). It participates in amino-acid degradation; L-histidine degradation into L-glutamate; N-formimidoyl-L-glutamate from L-histidine: step 1/3. This chain is Histidine ammonia-lyase, found in Burkholderia ambifaria (strain MC40-6).